A 324-amino-acid polypeptide reads, in one-letter code: Fructose-1,6-bisphosphatase class 1 (324 aa).

The Mg(2+) site is built by E88, D107, L109, and D110. Substrate is bound by residues 110–113 (DGSS), N199, and K265. E271 lines the Mg(2+) pocket.

Belongs to the FBPase class 1 family. Homotetramer. Mg(2+) is required as a cofactor.

Its subcellular location is the cytoplasm. The catalysed reaction is beta-D-fructose 1,6-bisphosphate + H2O = beta-D-fructose 6-phosphate + phosphate. It participates in carbohydrate biosynthesis; gluconeogenesis. This Neisseria gonorrhoeae (strain ATCC 700825 / FA 1090) protein is Fructose-1,6-bisphosphatase class 1.